We begin with the raw amino-acid sequence, 318 residues long: Formimidoylglutamase (318 aa).

The Mn(2+) site is built by histidine 130, aspartate 155, histidine 157, aspartate 159, aspartate 246, and aspartate 248.

The protein belongs to the arginase family. It depends on Mn(2+) as a cofactor.

The catalysed reaction is N-formimidoyl-L-glutamate + H2O = formamide + L-glutamate. Its pathway is amino-acid degradation; L-histidine degradation into L-glutamate; L-glutamate from N-formimidoyl-L-glutamate (hydrolase route): step 1/1. Functionally, catalyzes the conversion of N-formimidoyl-L-glutamate to L-glutamate and formamide. In Klebsiella pneumoniae subsp. pneumoniae (strain ATCC 700721 / MGH 78578), this protein is Formimidoylglutamase.